The sequence spans 394 residues: MSQPKRIHRICKGLARFTIRATLYGSWVLGLFPFTFDSRKRRLNRSKWLLAYGLVLNLTLLVLSMLPSTDDHNSVKVEVFQRNPLVKQVEELVEVISLITTLVTHLRTFSRSSELVEILNELLVLDKNHFSKLMLSECHTFNRYVIEKGLVIILEIGSSLVLYFGIPNSKIVVYEAVCIYIVQLEVLMVVMHFHLAVIYIYRYLWIINGQLLDMASRLRRGDSVDPDRIQLLLWLYSRLLDLNHRLTAIYDIQVTLFMATLFSVNIIVGHVLVICWINITRFSLLVIFLLFPQALIINFWDLWQGIAFCDLAESTGKKTSMILKLFNDMENMDQETERRVTEFTLFCSHRRLKVCHLGLLDINYEMGFRMIITNILYVVFLVQFDYMNLKFKTD.

Residues 1 to 16 (MSQPKRIHRICKGLAR) are Cytoplasmic-facing. A helical transmembrane segment spans residues 17–37 (FTIRATLYGSWVLGLFPFTFD). Residues 38 to 47 (SRKRRLNRSK) are Extracellular-facing. N-linked (GlcNAc...) asparagine glycosylation occurs at Asn-44. The chain crosses the membrane as a helical span at residues 48 to 68 (WLLAYGLVLNLTLLVLSMLPS). At 69–148 (TDDHNSVKVE…HTFNRYVIEK (80 aa)) the chain is on the cytoplasmic side. A helical membrane pass occupies residues 149 to 169 (GLVIILEIGSSLVLYFGIPNS). Lys-170 is a topological domain (extracellular). A helical transmembrane segment spans residues 171–191 (IVVYEAVCIYIVQLEVLMVVM). Topologically, residues 192–256 (HFHLAVIYIY…TAIYDIQVTL (65 aa)) are cytoplasmic. A helical membrane pass occupies residues 257–277 (FMATLFSVNIIVGHVLVICWI). Asn-278 is a glycosylation site (N-linked (GlcNAc...) asparagine). Residues 278 to 281 (NITR) are Extracellular-facing. The helical transmembrane segment at 282 to 302 (FSLLVIFLLFPQALIINFWDL) threads the bilayer. Residues 303 to 361 (WQGIAFCDLAESTGKKTSMILKLFNDMENMDQETERRVTEFTLFCSHRRLKVCHLGLLD) are Cytoplasmic-facing. The helical transmembrane segment at 362-382 (INYEMGFRMIITNILYVVFLV) threads the bilayer. Residues 383–394 (QFDYMNLKFKTD) lie on the Extracellular side of the membrane.

Belongs to the insect chemoreceptor superfamily. Gustatory receptor (GR) family. Gr22e subfamily. As to expression, expressed in neurons of the terminal external chemosensory organ of larvae.

The protein resides in the cell membrane. Probable gustatory receptor which mediates acceptance or avoidance behavior, depending on its substrates. The protein is Putative gustatory receptor 22a (Gr22a) of Drosophila melanogaster (Fruit fly).